We begin with the raw amino-acid sequence, 154 residues long: Ribosome maturation factor RimP (154 aa).

It belongs to the RimP family.

The protein resides in the cytoplasm. Its function is as follows. Required for maturation of 30S ribosomal subunits. The protein is Ribosome maturation factor RimP of Salmonella gallinarum (strain 287/91 / NCTC 13346).